A 517-amino-acid chain; its full sequence is UDP-N-acetylmuramyl-tripeptide synthetase (517 aa).

Serine 38 provides a ligand contact to UDP-N-acetyl-alpha-D-muramoyl-L-alanyl-D-glutamate. 116 to 122 provides a ligand contact to ATP; that stretch reads GTKGKTT. UDP-N-acetyl-alpha-D-muramoyl-L-alanyl-D-glutamate is bound by residues asparagine 160, 162–163, serine 189, and arginine 197; that span reads TT. The residue at position 231 (lysine 231) is an N6-carboxylysine.

The protein belongs to the MurCDEF family. MurE subfamily. Post-translationally, carboxylation is probably crucial for Mg(2+) binding and, consequently, for the gamma-phosphate positioning of ATP.

It localises to the cytoplasm. It functions in the pathway cell wall biogenesis; peptidoglycan biosynthesis. Catalyzes the addition of an amino acid to the nucleotide precursor UDP-N-acetylmuramoyl-L-alanyl-D-glutamate (UMAG) in the biosynthesis of bacterial cell-wall peptidoglycan. This chain is UDP-N-acetylmuramyl-tripeptide synthetase, found in Lacticaseibacillus paracasei (strain ATCC 334 / BCRC 17002 / CCUG 31169 / CIP 107868 / KCTC 3260 / NRRL B-441) (Lactobacillus paracasei).